We begin with the raw amino-acid sequence, 398 residues long: L-talarate/galactarate dehydratase (398 aa).

Substrate is bound by residues 46–48, 82–83, and lysine 195; these read DAK and KR. Lysine 197 (proton acceptor) is an active-site residue. Position 226 (aspartate 226) interacts with Mg(2+). Asparagine 228 contributes to the substrate binding site. Residues glutamate 252 and glutamate 278 each contribute to the Mg(2+) site. Histidine 328 functions as the Proton donor/acceptor in the catalytic mechanism. Glutamate 348 contacts substrate.

It belongs to the mandelate racemase/muconate lactonizing enzyme family. In terms of assembly, homooctamer; tetramer of dimers. Requires Mg(2+) as cofactor.

It catalyses the reaction L-altrarate = 5-dehydro-4-deoxy-D-glucarate + H2O. The enzyme catalyses galactarate = 5-dehydro-4-deoxy-D-glucarate + H2O. It carries out the reaction L-altrarate = galactarate. Its activity is regulated as follows. Competitively inhibited by tartronate. In terms of biological role, catalyzes the efficient dehydration of both L-talarate (also called L-altrarate) and galactarate to 5-keto-4-deoxy-D-glucarate (5-KDG). Also catalyzes the epimerization of L-talarate to galactarate; epimerization occurs in competition with dehydration. Is required for the utilization of L-talarate as a carbon source. Also functions in galactarate utilization. Is not active on other acid sugars. The protein is L-talarate/galactarate dehydratase of Salmonella typhimurium (strain LT2 / SGSC1412 / ATCC 700720).